The chain runs to 338 residues: MERAITPEKRDDDLQFDATLRPRTLQDYIGQEKIRENLKLFIDAAKGRSEALDHVLLYGPPGLGKTTLANIIACEMGVNIKSTSGPVIERPGDLAAILTNLEPHDVLFIDEIHRLSHVVEEILYPAMEDFQLDIIIGQGPSARSIKLDLPRFTLVGATTRAGLLSSPLRDRFGVISRLEFYTHDELAFIVTRSARILGMAIDREGALELARRSRGTPRIANRLLRRVRDYAQVRADGAITLSVVQETLRLLEIDEMGFDQMDRMILLTIIDKFGGGPVGLDTIGAAIGEESDTIEDVYEPFLIQNGFLNRTPRGRVATPAAYQHFGRLTPERPQGSLF.

The tract at residues 1-181 is large ATPase domain (RuvB-L); it reads MERAITPEKR…FGVISRLEFY (181 aa). ATP is bound by residues Leu-20, Arg-21, Gly-62, Lys-65, Thr-66, Thr-67, 128–130, Arg-171, Tyr-181, and Arg-218; that span reads EDF. Thr-66 is a binding site for Mg(2+). Positions 182–252 are small ATPAse domain (RuvB-S); sequence THDELAFIVT…VVQETLRLLE (71 aa). The tract at residues 255–338 is head domain (RuvB-H); the sequence is EMGFDQMDRM…TPERPQGSLF (84 aa). DNA contacts are provided by Arg-310 and Arg-315.

This sequence belongs to the RuvB family. Homohexamer. Forms an RuvA(8)-RuvB(12)-Holliday junction (HJ) complex. HJ DNA is sandwiched between 2 RuvA tetramers; dsDNA enters through RuvA and exits via RuvB. An RuvB hexamer assembles on each DNA strand where it exits the tetramer. Each RuvB hexamer is contacted by two RuvA subunits (via domain III) on 2 adjacent RuvB subunits; this complex drives branch migration. In the full resolvosome a probable DNA-RuvA(4)-RuvB(12)-RuvC(2) complex forms which resolves the HJ.

Its subcellular location is the cytoplasm. It carries out the reaction ATP + H2O = ADP + phosphate + H(+). Functionally, the RuvA-RuvB-RuvC complex processes Holliday junction (HJ) DNA during genetic recombination and DNA repair, while the RuvA-RuvB complex plays an important role in the rescue of blocked DNA replication forks via replication fork reversal (RFR). RuvA specifically binds to HJ cruciform DNA, conferring on it an open structure. The RuvB hexamer acts as an ATP-dependent pump, pulling dsDNA into and through the RuvAB complex. RuvB forms 2 homohexamers on either side of HJ DNA bound by 1 or 2 RuvA tetramers; 4 subunits per hexamer contact DNA at a time. Coordinated motions by a converter formed by DNA-disengaged RuvB subunits stimulates ATP hydrolysis and nucleotide exchange. Immobilization of the converter enables RuvB to convert the ATP-contained energy into a lever motion, pulling 2 nucleotides of DNA out of the RuvA tetramer per ATP hydrolyzed, thus driving DNA branch migration. The RuvB motors rotate together with the DNA substrate, which together with the progressing nucleotide cycle form the mechanistic basis for DNA recombination by continuous HJ branch migration. Branch migration allows RuvC to scan DNA until it finds its consensus sequence, where it cleaves and resolves cruciform DNA. The sequence is that of Holliday junction branch migration complex subunit RuvB from Trichlorobacter lovleyi (strain ATCC BAA-1151 / DSM 17278 / SZ) (Geobacter lovleyi).